The primary structure comprises 433 residues: Putative ankyrin repeat protein R578 (433 aa).

4 ANK repeats span residues 166–195 (NKEIILRNAVITNNLEMLEFAIEKGAILSE), 197–224 (DHLIVQSIRTSNLDLIKYIFSHIDLSKL), 356–386 (VNPNILKTSIYCCNNFDITKYLIDNGADIHS), and 388–415 (PSLIKTAITSGNLKTATFLMDNGAICDE).

This chain is Putative ankyrin repeat protein R578, found in Acanthamoeba polyphaga mimivirus (APMV).